Consider the following 221-residue polypeptide: DNA mismatch repair protein MutH (221 aa).

The protein belongs to the MutH family.

It localises to the cytoplasm. Its function is as follows. Sequence-specific endonuclease that cleaves unmethylated GATC sequences. It is involved in DNA mismatch repair. The chain is DNA mismatch repair protein MutH from Vibrio cholerae serotype O1 (strain ATCC 39541 / Classical Ogawa 395 / O395).